A 156-amino-acid chain; its full sequence is 6,7-dimethyl-8-ribityllumazine synthase (156 aa).

5-amino-6-(D-ribitylamino)uracil is bound by residues F22, A57 to E59, and T81 to I83. G86 to T87 contributes to the (2S)-2-hydroxy-3-oxobutyl phosphate binding site. The Proton donor role is filled by H89. F114 contributes to the 5-amino-6-(D-ribitylamino)uracil binding site. (2S)-2-hydroxy-3-oxobutyl phosphate is bound at residue R128.

It belongs to the DMRL synthase family. As to quaternary structure, forms an icosahedral capsid composed of 60 subunits, arranged as a dodecamer of pentamers.

The catalysed reaction is (2S)-2-hydroxy-3-oxobutyl phosphate + 5-amino-6-(D-ribitylamino)uracil = 6,7-dimethyl-8-(1-D-ribityl)lumazine + phosphate + 2 H2O + H(+). It participates in cofactor biosynthesis; riboflavin biosynthesis; riboflavin from 2-hydroxy-3-oxobutyl phosphate and 5-amino-6-(D-ribitylamino)uracil: step 1/2. Functionally, catalyzes the formation of 6,7-dimethyl-8-ribityllumazine by condensation of 5-amino-6-(D-ribitylamino)uracil with 3,4-dihydroxy-2-butanone 4-phosphate. This is the penultimate step in the biosynthesis of riboflavin. The sequence is that of 6,7-dimethyl-8-ribityllumazine synthase from Photorhabdus laumondii subsp. laumondii (strain DSM 15139 / CIP 105565 / TT01) (Photorhabdus luminescens subsp. laumondii).